A 623-amino-acid chain; its full sequence is Ciliated left-right organizer metallopeptidase (623 aa).

The signal sequence occupies residues 1-20; that stretch reads MSFLLCIGILLLPWFPCVCG. Residues 21 to 578 lie on the Extracellular side of the membrane; it reads KCIFDQIQRS…LFLVSEAKIS (558 aa). Residue histidine 249 participates in Zn(2+) binding. Residue glutamate 250 is part of the active site. Zn(2+) is bound by residues histidine 253 and histidine 326. A helical transmembrane segment spans residues 579-599; that stretch reads LAAVLSLMAVFALLSAAVLLY. The Cytoplasmic portion of the chain corresponds to 600–623; sequence RKNLSVRVHAASYRTPLPHILYRN.

It belongs to the peptidase M8 family. It depends on Zn(2+) as a cofactor. In terms of tissue distribution, expressed specifically in dorsal forerunner cells (DFCs) that form a ciliated Kupffer's vesicle later.

It is found in the membrane. Its function is as follows. Plays an essential role for patterning the left-right axis. Requires solely on the left side, downstream of the leftward flow, but upstream of dand5, a nodal inhibitor involved in left-right patterning. The chain is Ciliated left-right organizer metallopeptidase (cirop) from Danio rerio (Zebrafish).